Consider the following 415-residue polypeptide: Serine hydroxymethyltransferase (415 aa).

(6S)-5,6,7,8-tetrahydrofolate is bound by residues Leu-117 and 121 to 123; that span reads GHL. Lys-226 is subject to N6-(pyridoxal phosphate)lysine. 349 to 351 contributes to the (6S)-5,6,7,8-tetrahydrofolate binding site; that stretch reads SPF.

The protein belongs to the SHMT family. As to quaternary structure, homodimer. The cofactor is pyridoxal 5'-phosphate.

It localises to the cytoplasm. It catalyses the reaction (6R)-5,10-methylene-5,6,7,8-tetrahydrofolate + glycine + H2O = (6S)-5,6,7,8-tetrahydrofolate + L-serine. The protein operates within one-carbon metabolism; tetrahydrofolate interconversion. Its pathway is amino-acid biosynthesis; glycine biosynthesis; glycine from L-serine: step 1/1. Catalyzes the reversible interconversion of serine and glycine with tetrahydrofolate (THF) serving as the one-carbon carrier. This reaction serves as the major source of one-carbon groups required for the biosynthesis of purines, thymidylate, methionine, and other important biomolecules. Also exhibits THF-independent aldolase activity toward beta-hydroxyamino acids, producing glycine and aldehydes, via a retro-aldol mechanism. The polypeptide is Serine hydroxymethyltransferase (Geobacter sp. (strain M21)).